The following is a 350-amino-acid chain: Ferredoxin--NADP reductase (350 aa).

Positions 25, 44, 52, 57, 97, 132, 298, and 339 each coordinate FAD.

Belongs to the ferredoxin--NADP reductase type 2 family. In terms of assembly, homodimer. FAD is required as a cofactor.

It carries out the reaction 2 reduced [2Fe-2S]-[ferredoxin] + NADP(+) + H(+) = 2 oxidized [2Fe-2S]-[ferredoxin] + NADPH. This chain is Ferredoxin--NADP reductase, found in Chlorobium limicola (strain DSM 245 / NBRC 103803 / 6330).